The chain runs to 260 residues: Taurine import ATP-binding protein TauB (260 aa).

Residues 6-235 enclose the ABC transporter domain; it reads AQQVSVVYAS…RYAHGEPMRS (230 aa). 40-47 contributes to the ATP binding site; the sequence is GASGCGKS.

This sequence belongs to the ABC transporter superfamily. Taurine importer (TC 3.A.1.17.1) family. As to quaternary structure, the complex is composed of two ATP-binding proteins (TauB), two transmembrane proteins (TauC) and a solute-binding protein (TauA).

The protein localises to the cell inner membrane. It carries out the reaction taurine(out) + ATP + H2O = taurine(in) + ADP + phosphate + H(+). Part of the ABC transporter complex TauABC involved in taurine import. Responsible for energy coupling to the transport system. The chain is Taurine import ATP-binding protein TauB from Burkholderia pseudomallei (strain 1710b).